The following is a 234-amino-acid chain: Putative N-acetylmannosamine-6-phosphate 2-epimerase (234 aa).

It belongs to the NanE family.

The catalysed reaction is an N-acyl-D-glucosamine 6-phosphate = an N-acyl-D-mannosamine 6-phosphate. It functions in the pathway amino-sugar metabolism; N-acetylneuraminate degradation; D-fructose 6-phosphate from N-acetylneuraminate: step 3/5. Converts N-acetylmannosamine-6-phosphate (ManNAc-6-P) to N-acetylglucosamine-6-phosphate (GlcNAc-6-P). This Klebsiella pneumoniae (strain 342) protein is Putative N-acetylmannosamine-6-phosphate 2-epimerase.